We begin with the raw amino-acid sequence, 289 residues long: Glucosamine-6-phosphate deaminase 1 (289 aa).

N6-acetyllysine is present on Lys64. Catalysis depends on Asp72, which acts as the Proton acceptor; for enolization step. Asp141 acts as the For ring-opening step in catalysis. The active-site Proton acceptor; for ring-opening step is His143. The active-site For ring-opening step is Glu148. Thr161 is modified (phosphothreonine).

This sequence belongs to the glucosamine/galactosamine-6-phosphate isomerase family. In terms of assembly, homohexamer.

It localises to the cytoplasm. The enzyme catalyses alpha-D-glucosamine 6-phosphate + H2O = beta-D-fructose 6-phosphate + NH4(+). Its pathway is nucleotide-sugar biosynthesis; UDP-N-acetyl-alpha-D-glucosamine biosynthesis; alpha-D-glucosamine 6-phosphate from D-fructose 6-phosphate: step 1/1. Allosterically activated by N-acetylglucosamine-6-phosphate (GlcNAc6P). Catalyzes the reversible conversion of alpha-D-glucosamine 6-phosphate (GlcN-6P) into beta-D-fructose 6-phosphate (Fru-6P) and ammonium ion, a regulatory reaction step in de novo uridine diphosphate-N-acetyl-alpha-D-glucosamine (UDP-GlcNAc) biosynthesis via hexosamine pathway. Deamination is coupled to aldo-keto isomerization mediating the metabolic flux from UDP-GlcNAc toward Fru-6P. At high ammonium level can drive amination and isomerization of Fru-6P toward hexosamines and UDP-GlcNAc synthesis. Has a role in fine tuning the metabolic fluctuations of cytosolic UDP-GlcNAc and their effects on hyaluronan synthesis that occur during tissue remodeling. Seems to trigger calcium oscillations in mammalian eggs. These oscillations serve as the essential trigger for egg activation and early development of the embryo. The protein is Glucosamine-6-phosphate deaminase 1 of Pongo abelii (Sumatran orangutan).